The primary structure comprises 174 residues: Ribosome maturation factor RimM (174 aa).

The PRC barrel domain occupies 97–169 (GNKFYFHEVI…KVVMDLPEGL (73 aa)).

This sequence belongs to the RimM family. As to quaternary structure, binds ribosomal protein uS19.

It is found in the cytoplasm. Its function is as follows. An accessory protein needed during the final step in the assembly of 30S ribosomal subunit, possibly for assembly of the head region. Essential for efficient processing of 16S rRNA. May be needed both before and after RbfA during the maturation of 16S rRNA. It has affinity for free ribosomal 30S subunits but not for 70S ribosomes. The protein is Ribosome maturation factor RimM of Flavobacterium psychrophilum (strain ATCC 49511 / DSM 21280 / CIP 103535 / JIP02/86).